A 320-amino-acid polypeptide reads, in one-letter code: Lipoyl synthase (320 aa).

[4Fe-4S] cluster-binding residues include Cys66, Cys71, Cys77, Cys92, Cys96, Cys99, and Ser306. In terms of domain architecture, Radical SAM core spans Cys77–Ser295.

It belongs to the radical SAM superfamily. Lipoyl synthase family. Requires [4Fe-4S] cluster as cofactor.

It localises to the cytoplasm. It carries out the reaction [[Fe-S] cluster scaffold protein carrying a second [4Fe-4S](2+) cluster] + N(6)-octanoyl-L-lysyl-[protein] + 2 oxidized [2Fe-2S]-[ferredoxin] + 2 S-adenosyl-L-methionine + 4 H(+) = [[Fe-S] cluster scaffold protein] + N(6)-[(R)-dihydrolipoyl]-L-lysyl-[protein] + 4 Fe(3+) + 2 hydrogen sulfide + 2 5'-deoxyadenosine + 2 L-methionine + 2 reduced [2Fe-2S]-[ferredoxin]. It participates in protein modification; protein lipoylation via endogenous pathway; protein N(6)-(lipoyl)lysine from octanoyl-[acyl-carrier-protein]: step 2/2. Functionally, catalyzes the radical-mediated insertion of two sulfur atoms into the C-6 and C-8 positions of the octanoyl moiety bound to the lipoyl domains of lipoate-dependent enzymes, thereby converting the octanoylated domains into lipoylated derivatives. The protein is Lipoyl synthase of Thioalkalivibrio sulfidiphilus (strain HL-EbGR7).